The sequence spans 340 residues: N-acetyl-gamma-glutamyl-phosphate reductase (340 aa).

The active site involves Cys149.

It belongs to the NAGSA dehydrogenase family. Type 1 subfamily.

The protein resides in the cytoplasm. It carries out the reaction N-acetyl-L-glutamate 5-semialdehyde + phosphate + NADP(+) = N-acetyl-L-glutamyl 5-phosphate + NADPH + H(+). Its pathway is amino-acid biosynthesis; L-arginine biosynthesis; N(2)-acetyl-L-ornithine from L-glutamate: step 3/4. Functionally, catalyzes the NADPH-dependent reduction of N-acetyl-5-glutamyl phosphate to yield N-acetyl-L-glutamate 5-semialdehyde. The sequence is that of N-acetyl-gamma-glutamyl-phosphate reductase from Vesicomyosocius okutanii subsp. Calyptogena okutanii (strain HA).